The sequence spans 345 residues: UPF0324 membrane protein CTC_01844 (345 aa).

The next 10 membrane-spanning stretches (helical) occupy residues 7–24 (YSVG…SGFI), 28–50 (IPYR…NPIV), 70–87 (LAII…VLEV), 91–113 (SLIV…GKLF), 120–142 (SGLI…SPVI), 152–174 (AISA…GKYF), 181–203 (YGLW…YAFS), 209–231 (FSVI…FSYI), 261–283 (IFPW…IIPN), and 316–338 (SGFA…SFLV).

Belongs to the UPF0324 family.

The protein localises to the cell membrane. This chain is UPF0324 membrane protein CTC_01844, found in Clostridium tetani (strain Massachusetts / E88).